The primary structure comprises 121 residues: Large ribosomal subunit protein bL17 (121 aa).

The protein belongs to the bacterial ribosomal protein bL17 family. In terms of assembly, part of the 50S ribosomal subunit. Contacts protein L32.

The polypeptide is Large ribosomal subunit protein bL17 (Sulfurihydrogenibium sp. (strain YO3AOP1)).